We begin with the raw amino-acid sequence, 271 residues long: MPELPEVETTLRGIAPHVTGRRVTAVTARAAKLRLPIPPELGERLTGRVIERVERRAKYLLLRCGDGTAIIHLGMTGTLRVAPAGSPPGKYDHLDLVLDDGRTLRFRDPRKFGLVLWTGSDPLAHPLLAQLGPEPFPPLFNGSYLFSRSRKRNAAIKLLLMDNRIVVGVGNIYANEALFRARIHPERAAGSLSEEDCATLATAVGDVLRDAIAEGDTTLHEFIATEVPSGYFRINPAVYGQTGKPCTVCGTPIARIRLGNRSTWFCPVCQK.

Proline 2 acts as the Schiff-base intermediate with DNA in catalysis. Glutamate 3 acts as the Proton donor in catalysis. Lysine 58 functions as the Proton donor; for beta-elimination activity in the catalytic mechanism. Arginine 110 and arginine 152 together coordinate DNA. An FPG-type zinc finger spans residues 237–271 (AVYGQTGKPCTVCGTPIARIRLGNRSTWFCPVCQK). The active-site Proton donor; for delta-elimination activity is arginine 261.

Belongs to the FPG family. Monomer. Zn(2+) is required as a cofactor.

The enzyme catalyses Hydrolysis of DNA containing ring-opened 7-methylguanine residues, releasing 2,6-diamino-4-hydroxy-5-(N-methyl)formamidopyrimidine.. It catalyses the reaction 2'-deoxyribonucleotide-(2'-deoxyribose 5'-phosphate)-2'-deoxyribonucleotide-DNA = a 3'-end 2'-deoxyribonucleotide-(2,3-dehydro-2,3-deoxyribose 5'-phosphate)-DNA + a 5'-end 5'-phospho-2'-deoxyribonucleoside-DNA + H(+). In terms of biological role, involved in base excision repair of DNA damaged by oxidation or by mutagenic agents. Acts as a DNA glycosylase that recognizes and removes damaged bases. Has a preference for oxidized purines, such as 7,8-dihydro-8-oxoguanine (8-oxoG). Has AP (apurinic/apyrimidinic) lyase activity and introduces nicks in the DNA strand. Cleaves the DNA backbone by beta-delta elimination to generate a single-strand break at the site of the removed base with both 3'- and 5'-phosphates. In Geobacter sulfurreducens (strain ATCC 51573 / DSM 12127 / PCA), this protein is Formamidopyrimidine-DNA glycosylase.